A 396-amino-acid chain; its full sequence is Aspartate aminotransferase (396 aa).

L-aspartate is bound by residues Gly34, Trp130, and Asn183. Lys246 is modified (N6-(pyridoxal phosphate)lysine). Arg374 lines the L-aspartate pocket.

This sequence belongs to the class-I pyridoxal-phosphate-dependent aminotransferase family. Homodimer. Requires pyridoxal 5'-phosphate as cofactor.

Its subcellular location is the cytoplasm. It carries out the reaction L-aspartate + 2-oxoglutarate = oxaloacetate + L-glutamate. The chain is Aspartate aminotransferase (aspC) from Salmonella typhi.